The primary structure comprises 438 residues: Gamma-glutamyl phosphate reductase (438 aa).

A disordered region spans residues 1 to 21; that stretch reads MTAQTSSDVTDQKTDLTRESE. Positions 10–21 are enriched in basic and acidic residues; it reads TDQKTDLTRESE.

The protein belongs to the gamma-glutamyl phosphate reductase family.

It is found in the cytoplasm. The enzyme catalyses L-glutamate 5-semialdehyde + phosphate + NADP(+) = L-glutamyl 5-phosphate + NADPH + H(+). Its pathway is amino-acid biosynthesis; L-proline biosynthesis; L-glutamate 5-semialdehyde from L-glutamate: step 2/2. Functionally, catalyzes the NADPH-dependent reduction of L-glutamate 5-phosphate into L-glutamate 5-semialdehyde and phosphate. The product spontaneously undergoes cyclization to form 1-pyrroline-5-carboxylate. In Corynebacterium efficiens (strain DSM 44549 / YS-314 / AJ 12310 / JCM 11189 / NBRC 100395), this protein is Gamma-glutamyl phosphate reductase.